The sequence spans 379 residues: DNA replication and repair protein RecF (379 aa).

An ATP-binding site is contributed by 30–37 (GDNAQGKS).

Belongs to the RecF family.

It is found in the cytoplasm. The RecF protein is involved in DNA metabolism; it is required for DNA replication and normal SOS inducibility. RecF binds preferentially to single-stranded, linear DNA. It also seems to bind ATP. This is DNA replication and repair protein RecF from Thermosynechococcus vestitus (strain NIES-2133 / IAM M-273 / BP-1).